The primary structure comprises 233 residues: Ycf53-like protein (233 aa).

This sequence belongs to the ycf53 family.

The protein is Ycf53-like protein of Synechocystis sp. (strain ATCC 27184 / PCC 6803 / Kazusa).